The sequence spans 585 residues: MSLSGVPLSAGLAPSPSNKPTNGKGQNIVRRSGNYKPALWDYDYLQSLPTLYAGEAHVEKLNKLKGEVRIMLEKTVTENPLAQLEQIDTLYRLGISYHFQDEIKALLNTIHNNNNNNNNNDDVYATALEFKLLRLYGYTVHSEVFNVFKDEIDKGFKAISLCGDYVKGMLSLYEASFYSFKGETILDEARDFSTKHLQKYVMMRHNNNSKDQSVDDDDDLVILVEYALELPMHWRMIRLEAKWFIDVYSKRRDDMNPTFLELAQIDFNLLQSTYQEDLKHVSRWWSTCKLGERLPFCRDRLVEVFLLAVALKYEAEFGYARRLLTKIGVLVTLMDDIYDVYGTLDELKLLEDAIERWNINELDQLPEYMNIFFVAMYNVVNGIAYDVLKENEILIVKYLKRAWMDACKSYMVEAKWYYSGYTPSLEEYLENGLISITIPLDLIFLYCLTTSPITEDSMEYLLQYPTILGLSGTLFRLVDDLATSSDELKRGDNPKSIQCYMHESGVCENDSREYIKNLISETWKQMNEVRVAKSPLFSQAFIESAVDFVRGAMLLYQKGDGFGTKHDGDAKDKLVSLFFNPIPTP.

The disordered stretch occupies residues 1–29 (MSLSGVPLSAGLAPSPSNKPTNGKGQNIV). The N-terminal 31 residues, 1–31 (MSLSGVPLSAGLAPSPSNKPTNGKGQNIVRR), are a transit peptide targeting the chloroplast. A compositionally biased stretch (polar residues) spans 15–25 (SPSNKPTNGKG). Arg-298, Asp-335, Asp-339, Arg-476, and Asp-479 together coordinate (2E)-geranyl diphosphate. Mg(2+) contacts are provided by Asp-335 and Asp-339. A DDXXD motif motif is present at residues 335–339 (DDIYD). Residues Asp-479, Thr-483, and Glu-487 each contribute to the Mg(2+) site.

It belongs to the terpene synthase family. Tpsb subfamily. Requires Mg(2+) as cofactor. The cofactor is Mn(2+). In terms of tissue distribution, expressed in trichomes. Detected in flowers, but not in leaves.

The protein localises to the plastid. Its subcellular location is the chloroplast. This Humulus lupulus (European hop) protein is Probable monoterpene synthase MTS1, chloroplastic.